A 218-amino-acid chain; its full sequence is Adenylate kinase (218 aa).

ATP is bound at residue 10-15 (GAGKGT). An NMP region spans residues 30 to 59 (STGDMLRAAVKAGTPLGIEAKKVMDAGGLM). AMP contacts are provided by residues threonine 31, arginine 36, 57-59 (GLM), 85-88 (GYPR), and glutamine 92. The LID stretch occupies residues 122 to 159 (GRWVHLASGRSYNTQSNPPKVAGQDDITGEALIQRDDD). ATP is bound by residues arginine 123 and 132 to 133 (SY). Arginine 156 and arginine 167 together coordinate AMP. Glycine 203 serves as a coordination point for ATP.

Belongs to the adenylate kinase family. As to quaternary structure, monomer.

Its subcellular location is the cytoplasm. The catalysed reaction is AMP + ATP = 2 ADP. Its pathway is purine metabolism; AMP biosynthesis via salvage pathway; AMP from ADP: step 1/1. In terms of biological role, catalyzes the reversible transfer of the terminal phosphate group between ATP and AMP. Plays an important role in cellular energy homeostasis and in adenine nucleotide metabolism. This is Adenylate kinase from Bordetella avium (strain 197N).